The chain runs to 171 residues: Protein hunchback (171 aa).

2 disordered regions span residues 14–93 (PMSH…PMQI) and 124–171 (SNDK…KYMA). Over residues 17-31 (HHHHHSHHSHGHHHS) the composition is skewed to basic residues. Low complexity-rich tracts occupy residues 32 to 42 (NSNSNASSPRQ) and 52 to 80 (SSSNLHLEQYLKQQQQHQQQQQQPMDTPL). Over residues 152–171 (EPEKDHDLMSNSSEDMKYMA) the composition is skewed to basic and acidic residues.

This sequence belongs to the hunchback C2H2-type zinc-finger protein family.

The protein resides in the nucleus. In terms of biological role, gap class segmentation protein that controls development of head structures. This chain is Protein hunchback (hb), found in Scaptomyza albovittata (Fruit fly).